Consider the following 358-residue polypeptide: Methionine aminopeptidase 2 (358 aa).

H109 is a binding site for substrate. The a divalent metal cation site is built by D130, D141, and H210. H218 lines the substrate pocket. A divalent metal cation is bound by residues E243 and E339.

It belongs to the peptidase M24A family. Methionine aminopeptidase eukaryotic type 2 subfamily. Requires Co(2+) as cofactor. Zn(2+) is required as a cofactor. The cofactor is Mn(2+). It depends on Fe(2+) as a cofactor.

It is found in the cytoplasm. It carries out the reaction Release of N-terminal amino acids, preferentially methionine, from peptides and arylamides.. Functionally, cotranslationally removes the N-terminal methionine from nascent proteins. The N-terminal methionine is often cleaved when the second residue in the primary sequence is small and uncharged (Met-Ala-, Cys, Gly, Pro, Ser, Thr, or Val). This Encephalitozoon intestinalis (strain ATCC 50506) (Microsporidian parasite) protein is Methionine aminopeptidase 2.